The chain runs to 452 residues: Argininosuccinate lyase (452 aa).

Positions 431–452 are disordered; it reads AFRKDSTGSTSPKWSFRAMRRA.

The protein belongs to the lyase 1 family. Argininosuccinate lyase subfamily.

The protein resides in the cytoplasm. The catalysed reaction is 2-(N(omega)-L-arginino)succinate = fumarate + L-arginine. Its pathway is amino-acid biosynthesis; L-arginine biosynthesis; L-arginine from L-ornithine and carbamoyl phosphate: step 3/3. The polypeptide is Argininosuccinate lyase (Tremblaya princeps).